Consider the following 176-residue polypeptide: ATP synthase subunit b (176 aa).

The helical transmembrane segment at 14–34 threads the bilayer; it reads STTLGTMIVVSGAFLILMLLL.

Belongs to the ATPase B chain family. In terms of assembly, F-type ATPases have 2 components, F(1) - the catalytic core - and F(0) - the membrane proton channel. F(1) has five subunits: alpha(3), beta(3), gamma(1), delta(1), epsilon(1). F(0) has three main subunits: a(1), b(2) and c(10-14). The alpha and beta chains form an alternating ring which encloses part of the gamma chain. F(1) is attached to F(0) by a central stalk formed by the gamma and epsilon chains, while a peripheral stalk is formed by the delta and b chains.

It is found in the cell membrane. Functionally, f(1)F(0) ATP synthase produces ATP from ADP in the presence of a proton or sodium gradient. F-type ATPases consist of two structural domains, F(1) containing the extramembraneous catalytic core and F(0) containing the membrane proton channel, linked together by a central stalk and a peripheral stalk. During catalysis, ATP synthesis in the catalytic domain of F(1) is coupled via a rotary mechanism of the central stalk subunits to proton translocation. In terms of biological role, component of the F(0) channel, it forms part of the peripheral stalk, linking F(1) to F(0). This chain is ATP synthase subunit b, found in Enterococcus faecalis (strain ATCC 700802 / V583).